The primary structure comprises 222 residues: Ribosomal RNA small subunit methyltransferase G (222 aa).

S-adenosyl-L-methionine-binding positions include Gly-73, Leu-78, 124 to 125 (AE), and Arg-137.

This sequence belongs to the methyltransferase superfamily. RNA methyltransferase RsmG family.

The protein resides in the cytoplasm. Its function is as follows. Specifically methylates the N7 position of guanine in position 518 of 16S rRNA. This Acidothermus cellulolyticus (strain ATCC 43068 / DSM 8971 / 11B) protein is Ribosomal RNA small subunit methyltransferase G.